Here is a 275-residue protein sequence, read N- to C-terminus: tRNA pseudouridine synthase A (275 aa).

Aspartate 56 acts as the Nucleophile in catalysis. Tyrosine 110 contacts substrate.

The protein belongs to the tRNA pseudouridine synthase TruA family.

The enzyme catalyses uridine(38/39/40) in tRNA = pseudouridine(38/39/40) in tRNA. Functionally, formation of pseudouridine at positions 38, 39 and 40 in the anticodon stem and loop of transfer RNAs. This is tRNA pseudouridine synthase A from Haloarcula marismortui (strain ATCC 43049 / DSM 3752 / JCM 8966 / VKM B-1809) (Halobacterium marismortui).